A 110-amino-acid polypeptide reads, in one-letter code: Small ribosomal subunit protein bS16 (110 aa).

The tract at residues 87–110 (ARNNPEKAVPRKERKAAAEAAAKK) is disordered.

The protein belongs to the bacterial ribosomal protein bS16 family.

The protein is Small ribosomal subunit protein bS16 of Rhodopseudomonas palustris (strain HaA2).